Consider the following 294-residue polypeptide: Large ribosomal subunit protein uL18 (294 aa).

Residues 247–275 are disordered; the sequence is RADPSPSAKKAAKPSKRHTAKRLTYDERK. The segment covering 256–267 has biased composition (basic residues); it reads KAAKPSKRHTAK.

The protein belongs to the universal ribosomal protein uL18 family. Component of the large ribosomal subunit (LSU).

It localises to the cytoplasm. It is found in the nucleus. Functionally, component of the ribosome, a large ribonucleoprotein complex responsible for the synthesis of proteins in the cell. The small ribosomal subunit (SSU) binds messenger RNAs (mRNAs) and translates the encoded message by selecting cognate aminoacyl-transfer RNA (tRNA) molecules. The large subunit (LSU) contains the ribosomal catalytic site termed the peptidyl transferase center (PTC), which catalyzes the formation of peptide bonds, thereby polymerizing the amino acids delivered by tRNAs into a polypeptide chain. The nascent polypeptides leave the ribosome through a tunnel in the LSU and interact with protein factors that function in enzymatic processing, targeting, and the membrane insertion of nascent chains at the exit of the ribosomal tunnel. In Caenorhabditis briggsae, this protein is Large ribosomal subunit protein uL18 (rpl-5).